The sequence spans 277 residues: Ribonuclease HII (277 aa).

Residues 72-260 (EYIAGIDEAG…IKEMIEMKKE (189 aa)) form the RNase H type-2 domain. A divalent metal cation is bound by residues aspartate 78, glutamate 79, and aspartate 170.

This sequence belongs to the RNase HII family. Mn(2+) serves as cofactor. It depends on Mg(2+) as a cofactor.

The protein resides in the cytoplasm. The catalysed reaction is Endonucleolytic cleavage to 5'-phosphomonoester.. Functionally, endonuclease that specifically degrades the RNA of RNA-DNA hybrids. The sequence is that of Ribonuclease HII from Geobacillus sp. (strain WCH70).